Consider the following 721-residue polypeptide: mRNA (2'-O-methyladenosine-N(6)-)-methyltransferase (721 aa).

2 stretches are compositionally biased toward polar residues: residues 1–10 and 19–36; these read MTSENHTTIK and PTGSTSQAAPFSPSTSKP. The segment at 1–37 is disordered; it reads MTSENHTTIKADSALVMSPTGSTSQAAPFSPSTSKPI. A WW domain is found at 43-77; it reads ELIQAGWSKCWSKRENRPYYFNRFTNQSLWEMPVL. Positions 93-170 are disordered; sequence PASGEANADA…KQGQASTPAP (78 aa). Low complexity predominate over residues 132–148; it reads IPATPTTPTVPISPSTP. Substrate contacts are provided by Arg-239 and Arg-269. Residue 558–561 coordinates S-adenosyl-L-methionine; that stretch reads NPPF. Substrate-binding positions include Glu-563 and 593–597; that span reads WRDPP. Residue 619–621 participates in S-adenosyl-L-methionine binding; it reads FEH. The span at 675–686 shows a compositional bias: low complexity; that stretch reads SGRSLPSPGPSS. Residues 675 to 721 form a disordered region; the sequence is SGRSLPSPGPSSTNTGEKDSKPAPERTAPSQDNSSPVDKTAQDTTNT. The segment covering 702-721 has biased composition (polar residues); that stretch reads APSQDNSSPVDKTAQDTTNT.

This sequence belongs to the CAPAM family.

Its subcellular location is the nucleus. It catalyses the reaction a 5'-end (N(7)-methyl 5'-triphosphoguanosine)-(2'-O-methyladenosine) in mRNA + S-adenosyl-L-methionine = a 5'-end (N(7)-methyl 5'-triphosphoguanosine)-(N(6),2'-O-dimethyladenosine) in mRNA + S-adenosyl-L-homocysteine + H(+). Cap-specific adenosine methyltransferase activity is inhibited by zinc. In terms of biological role, cap-specific adenosine methyltransferase that catalyzes formation of N(6),2'-O-dimethyladenosine cap (m6A(m)) by methylating the adenosine at the second transcribed position of capped mRNAs. This is mRNA (2'-O-methyladenosine-N(6)-)-methyltransferase (pcif1) from Danio rerio (Zebrafish).